The following is a 480-amino-acid chain: Iroquois-class homeodomain protein IRX-1 (480 aa).

Positions 127-189 (DPGRPKNATR…NARRRLKKEN (63 aa)) form a DNA-binding region, homeobox; TALE-type. Disordered stretches follow at residues 190–285 (KVTW…LGLV), 318–354 (SLAE…PLQH), and 401–480 (PHGP…LPSA). Positions 210–232 (TEGDPEKAEDDEEIDLESIDIDQ) are enriched in acidic residues. A Phosphoserine modification is found at S241. Residues 254 to 263 (ARVAPPASAR) show a composition bias toward low complexity. The span at 264–280 (DQSSPLSAAETLKSQDS) shows a compositional bias: polar residues. Residues 339–351 (SHASAHGPPSGSP) are compositionally biased toward low complexity.

It belongs to the TALE/IRO homeobox family. In terms of tissue distribution, expressed in specific and overlapping patterns with Irx1 and Irx2 in the developing and adult metanephric kidney. In the adult metanephros, renal expression is found in the loop of Henle in the S3 proximal tubule segment and in the thick ascending limb (TAL) of the distal tubule.

It localises to the nucleus. The protein is Iroquois-class homeodomain protein IRX-1 (Irx1) of Mus musculus (Mouse).